Reading from the N-terminus, the 351-residue chain is Neutral protease 2 homolog MGG_10927 (351 aa).

The first 16 residues, 1–16, serve as a signal peptide directing secretion; sequence MKFSIGVSLLATLAGA. Positions 17–177 are excised as a propeptide; that stretch reads VNVDMAKRDT…AAFLAKRTIV (161 aa). 2 disulfides stabilise this stretch: Cys-181–Cys-253 and Cys-260–Cys-278. Position 303 (His-303) interacts with Zn(2+). Glu-304 is a catalytic residue. His-307 contributes to the Zn(2+) binding site.

This sequence belongs to the peptidase M35 family. Requires Zn(2+) as cofactor.

The protein resides in the secreted. The enzyme catalyses Preferential cleavage of bonds with hydrophobic residues in P1'. Also 3-Asn-|-Gln-4 and 8-Gly-|-Ser-9 bonds in insulin B chain.. Secreted metalloproteinase that allows assimilation of proteinaceous substrates. Shows high activities on basic nuclear substrates such as histone and protamine. The chain is Neutral protease 2 homolog MGG_10927 from Colletotrichum graminicola (strain M1.001 / M2 / FGSC 10212) (Maize anthracnose fungus).